The sequence spans 243 residues: Adenosylcobinamide-GDP ribazoletransferase (243 aa).

6 helical membrane-spanning segments follow: residues 33–53, 59–79, 105–125, 127–147, 172–192, and 223–243; these read FLPV…LLAP, IIIV…HIDG, IGAF…TLAY, TENM…VFAA, VISI…GAII, and TIEI…SIII.

It belongs to the CobS family. The cofactor is Mg(2+).

It localises to the cell membrane. The enzyme catalyses alpha-ribazole + adenosylcob(III)inamide-GDP = adenosylcob(III)alamin + GMP + H(+). It catalyses the reaction alpha-ribazole 5'-phosphate + adenosylcob(III)inamide-GDP = adenosylcob(III)alamin 5'-phosphate + GMP + H(+). It participates in cofactor biosynthesis; adenosylcobalamin biosynthesis; adenosylcobalamin from cob(II)yrinate a,c-diamide: step 7/7. Its function is as follows. Joins adenosylcobinamide-GDP and alpha-ribazole to generate adenosylcobalamin (Ado-cobalamin). Also synthesizes adenosylcobalamin 5'-phosphate from adenosylcobinamide-GDP and alpha-ribazole 5'-phosphate. The chain is Adenosylcobinamide-GDP ribazoletransferase from Alkaliphilus oremlandii (strain OhILAs) (Clostridium oremlandii (strain OhILAs)).